The following is a 295-amino-acid chain: Cytidine deaminase (295 aa).

CMP/dCMP-type deaminase domains follow at residues 48–168 (EDAD…FGPA) and 187–295 (DDDE…YLSL). 89–91 (NME) contributes to the substrate binding site. Zn(2+) is bound at residue His102. Residue Glu104 is the Proton donor of the active site. Zn(2+) is bound by residues Cys129 and Cys132.

The protein belongs to the cytidine and deoxycytidylate deaminase family. In terms of assembly, homodimer. It depends on Zn(2+) as a cofactor.

It carries out the reaction cytidine + H2O + H(+) = uridine + NH4(+). The catalysed reaction is 2'-deoxycytidine + H2O + H(+) = 2'-deoxyuridine + NH4(+). In terms of biological role, this enzyme scavenges exogenous and endogenous cytidine and 2'-deoxycytidine for UMP synthesis. The sequence is that of Cytidine deaminase from Vibrio cholerae serotype O1 (strain ATCC 39315 / El Tor Inaba N16961).